An 867-amino-acid polypeptide reads, in one-letter code: Translation initiation factor IF-2 (867 aa).

Residues 367–534 (TRAPVVTIMG…AILLQSEILE (168 aa)) form the tr-type G domain. Positions 376-383 (GHVDHGKT) are G1. 376–383 (GHVDHGKT) contacts GTP. A G2 region spans residues 401 to 405 (GITQN). A G3 region spans residues 422-425 (DTPG). GTP contacts are provided by residues 422–426 (DTPGH) and 476–479 (NKID). The interval 476 to 479 (NKID) is G4. Residues 512-514 (SAK) are G5.

This sequence belongs to the TRAFAC class translation factor GTPase superfamily. Classic translation factor GTPase family. IF-2 subfamily.

Its subcellular location is the cytoplasm. Functionally, one of the essential components for the initiation of protein synthesis. Protects formylmethionyl-tRNA from spontaneous hydrolysis and promotes its binding to the 30S ribosomal subunits. Also involved in the hydrolysis of GTP during the formation of the 70S ribosomal complex. The polypeptide is Translation initiation factor IF-2 (Buchnera aphidicola subsp. Schizaphis graminum (strain Sg)).